We begin with the raw amino-acid sequence, 394 residues long: Bone morphogenetic protein 15 (394 aa).

The first 18 residues, 1–18 (MVLLSILRILLLWGLVLF), serve as a signal peptide directing secretion. The propeptide occupies 19-269 (MEHRVQMTQV…DPSLLLRRAR (251 aa)). N-linked (GlcNAc...) asparagine glycans are attached at residues Asn-87 and Asn-238. 3 cysteine pairs are disulfide-bonded: Cys-293–Cys-359, Cys-322–Cys-391, and Cys-326–Cys-393. The N-linked (GlcNAc...) asparagine glycan is linked to Asn-375.

It belongs to the TGF-beta family. As to quaternary structure, homodimer or heterodimer (Potential). But, in contrast to other members of this family, cannot be disulfide-linked.

It is found in the secreted. Functionally, may be involved in follicular development. Seems to be an oocyte-specific growth/differentiation factor that stimulates folliculogenesis and granulosa cell (GC) growth. This is Bone morphogenetic protein 15 (BMP15) from Bos taurus (Bovine).